We begin with the raw amino-acid sequence, 449 residues long: UDP-N-acetylglucosamine 1-carboxyvinyltransferase (449 aa).

51–52 (KN) lines the phosphoenolpyruvate pocket. Arginine 121 is a binding site for UDP-N-acetyl-alpha-D-glucosamine. The Proton donor role is filled by cysteine 145. At cysteine 145 the chain carries 2-(S-cysteinyl)pyruvic acid O-phosphothioketal. Residues 150 to 154 (RPVDQ), aspartate 333, and isoleucine 355 contribute to the UDP-N-acetyl-alpha-D-glucosamine site.

Belongs to the EPSP synthase family. MurA subfamily.

Its subcellular location is the cytoplasm. It carries out the reaction phosphoenolpyruvate + UDP-N-acetyl-alpha-D-glucosamine = UDP-N-acetyl-3-O-(1-carboxyvinyl)-alpha-D-glucosamine + phosphate. It functions in the pathway cell wall biogenesis; peptidoglycan biosynthesis. Functionally, cell wall formation. Adds enolpyruvyl to UDP-N-acetylglucosamine. In Burkholderia lata (strain ATCC 17760 / DSM 23089 / LMG 22485 / NCIMB 9086 / R18194 / 383), this protein is UDP-N-acetylglucosamine 1-carboxyvinyltransferase.